A 1526-amino-acid chain; its full sequence is MELSPLQPVNENMQMNKKKNEDAKKRLSIERIYQKKTQLEHILLRPDTYIGSVELVTQQMWVYDEDVGINYREVTFVPGLYKIFDEILVNAADNKQRDPKMSCIRVTIDPENNLISIWNNGKGIPVVEHKVEKMYVPALIFGQLLTSSNYDDDEKKVTGGRNGYGAKLCNIFSTRFTVETASKEYKKMFKQTWMDNMGRAGDMELKPFNGEDYTCITFQPDLSKFKMQSLDKDIVALMVRRAYDIAGSTKDVKVFLNGNKLPVKGFRSYVDMYLKDKLDETGNALKVVHEQVNPRWEVCLTMSEKGFQQISFVNSIATSKGGRHVDYVADQIVSKLVDVVKKKNKGGVAVKAHQVKNHMWIFVNALIENPTFDSQTKENMTLQAKSFGSTCQLSEKFIKAAIGCGIVESILNWVKFKAQIQLNKKCSAVKHNRIKGIPKLDDANDAGSRNSTECTLILTEGDSAKTLAVSGLGVVGRDKYGVFPLRGKILNVREASHKQIMENAEINNIIKIVGLQYKKNYEDEDSLKTLRYGKIMIMTDQDQDGSHIKGLLINFIHHNWPSLLRHRFLEEFITPIVKVSKNKQELAFYSLPEFEEWKSSTPNHKKWKVKYYKGLGTSTSKEAKEYFADMKRHRIQFKYSGPEDDAAISLAFSKKQVDDRKEWLTHFMEDRRQRKLLGLPEDYLYGQTTTYLTYNDFINKELILFSNSDNERSIPSMVDGLKPGQRKVLFTCFKRNDKREVKVAQLAGSVAEMSSYHHGEMSLMMTIINLAQNFVGSNNLNLLQPIGQFGTRLHGGKDSASPRYIFTMLSPLTRLLFPPKDDHTLKFLYDDNQRVEPEWYIPIIPMVLINGAEGIGTGWSCKIPNFDIREVVNNIRRLLDGEEPLPMLPSYKNFKGTIEELASNQYVINGEVAILNSTTIEISELPIRTWTQTYKEQVLEPMLNGTEKTPPLITDYREYHTDTTVKFVIKMTEEKLAEAERVGLHKVFKLQTSLTCNSMVLFDHVGCLKKYDTVLDILKDFFELRLKYYGLRKEWLLGMLGAESAKLNNQARFILEKIDGKIIIENKPKKELIKVLIQRGYDSDPVKAWKEAQQKVPDEEENEESDNENSDSVAESGPTFNYLLDMPLWYLTKEKKDELCKQRNEKEQELNTLKNKSPSDLWKEDLAVFIEELEVVEAKEKQDEQVGLPGKGGKAKGKKAQMSEVLPSPHGKRVIPQVTMEMKAEAEKKIRKKIKSENVEGTPTENGLELGSLKQRIEKKQKKEPGAMTKKQTTLAFKPIKKGKKRNPWSDSESDMSSNESNVDVPPREKDPRRAATKAKFTMDLDSDEDFSGSDGKDEDEDFFPLDTTPPKTKIPQKNTKKALKPQKSAMSGDPESDEKDSVPASPGPPAADLPADTEQLKPSSKQTVAVKKTATKSQSSTSTAGTKKRAVPKGSKSDSALNAHGPEKPVPAKAKNSRKRKQSSSDDSDSDFEKVVSKVAASKKSKGENQDFRVDLDETMVPRAKSGRAKKPIKYLEESDDDDLF.

Methionine 1 carries the post-translational modification N-acetylmethionine. The disordered stretch occupies residues 1–21 (MELSPLQPVNENMQMNKKKNE). A Phosphoserine modification is found at serine 4. Lysine 17 is covalently cross-linked (Glycyl lysine isopeptide (Lys-Gly) (interchain with G-Cter in SUMO2)). Residues asparagine 90, asparagine 119, and 147–149 (SSN) each bind ATP. Residues lysine 155 and lysine 156 each participate in a glycyl lysine isopeptide (Lys-Gly) (interchain with G-Cter in SUMO2) cross-link. An ATP-binding site is contributed by 160–167 (GRNGYGAK). Lysine 260 participates in a covalent cross-link: Glycyl lysine isopeptide (Lys-Gly) (interchain with G-Cter in SUMO2). Position 281 is a phosphothreonine (threonine 281). The interaction with DNA stretch occupies residues 341 to 343 (KKK). Lysine 351 participates in a covalent cross-link: Glycyl lysine isopeptide (Lys-Gly) (interchain with G-Cter in SUMO2). 375–377 (QTK) provides a ligand contact to ATP. Residues lysine 385, lysine 396, lysine 415, lysine 417, lysine 424, and lysine 439 each participate in a glycyl lysine isopeptide (Lys-Gly) (interchain with G-Cter in SUMO2) cross-link. The Toprim domain occupies 454–571 (CTLILTEGDS…SLLRHRFLEE (118 aa)). Glutamate 460 lines the Mg(2+) pocket. Residues lysine 465, lysine 479, and lysine 528 each participate in a glycyl lysine isopeptide (Lys-Gly) (interchain with G-Cter in SUMO2) cross-link. Positions 540 and 542 each coordinate Mg(2+). Glycyl lysine isopeptide (Lys-Gly) (interchain with G-Cter in SUMO2) cross-links involve residues lysine 583, lysine 598, lysine 613, lysine 621, lysine 624, lysine 631, lysine 638, lysine 654, lysine 661, and lysine 675. The region spanning 714–1166 (IPSMVDGLKP…SPSDLWKEDL (453 aa)) is the Topo IIA-type catalytic domain. The O-(5'-phospho-DNA)-tyrosine intermediate role is filled by tyrosine 804. The interval 989 to 998 (KLQTSLTCNS) is interaction with DNA. Lysine 1074 participates in a covalent cross-link: Glycyl lysine isopeptide (Lys-Gly) (interchain with G-Cter in SUMO2). Disordered regions lie at residues 1089–1117 (WKEA…AESG) and 1180–1217 (EKQD…VIPQ). Positions 1098–1109 (DEEENEESDNEN) are enriched in acidic residues. At serine 1105 the chain carries Phosphoserine; by CK1. Residues lysine 1191 and lysine 1199 each participate in a glycyl lysine isopeptide (Lys-Gly) (interchain with G-Cter in SUMO2) cross-link. Residue serine 1208 is modified to Phosphoserine. Lysine 1223 participates in a covalent cross-link: Glycyl lysine isopeptide (Lys-Gly) (interchain with G-Cter in SUMO2). Positions 1233–1526 (KIKSENVEGT…LEESDDDDLF (294 aa)) are disordered. Lysine 1235 is covalently cross-linked (Glycyl lysine isopeptide (Lys-Gly) (interchain with G-Cter in SUMO1); alternate). A Glycyl lysine isopeptide (Lys-Gly) (interchain with G-Cter in SUMO2); alternate cross-link involves residue lysine 1235. Threonine 1242 is modified (phosphothreonine). A Glycyl lysine isopeptide (Lys-Gly) (interchain with G-Cter in SUMO2) cross-link involves residue lysine 1254. A compositionally biased stretch (basic and acidic residues) spans 1255-1265 (QRIEKKQKKEP). Glycyl lysine isopeptide (Lys-Gly) (interchain with G-Cter in SUMO2) cross-links involve residues lysine 1271, lysine 1278, and lysine 1281. Serine 1290, serine 1292, serine 1294, and serine 1297 each carry phosphoserine. Threonine 1322 is subject to Phosphothreonine. Residues 1325–1344 (LDSDEDFSGSDGKDEDEDFF) are compositionally biased toward acidic residues. Residues serine 1327 and serine 1332 each carry the phosphoserine modification. Residue threonine 1349 is modified to Phosphothreonine. Glycyl lysine isopeptide (Lys-Gly) (interchain with G-Cter in SUMO2) cross-links involve residues lysine 1358, lysine 1362, and lysine 1368. Phosphoserine occurs at positions 1369 and 1372. A Glycyl lysine isopeptide (Lys-Gly) (interchain with G-Cter in SUMO2) cross-link involves residue lysine 1380. Serine 1382 and serine 1386 each carry phosphoserine. Low complexity predominate over residues 1405 to 1426 (SKQTVAVKKTATKSQSSTSTAG). A Glycyl lysine isopeptide (Lys-Gly) (interchain with G-Cter in SUMO2); alternate cross-link involves residue lysine 1417. Residue lysine 1417 is modified to N6-acetyllysine; alternate. The interaction with PLSCR1 stretch occupies residues 1428-1434 (KKRAVPK). Lysine 1437 is covalently cross-linked (Glycyl lysine isopeptide (Lys-Gly) (interchain with G-Cter in SUMO2); alternate). At lysine 1437 the chain carries N6-acetyllysine; alternate. Residues lysine 1449 and lysine 1454 each participate in a glycyl lysine isopeptide (Lys-Gly) (interchain with G-Cter in SUMO2) cross-link. Residues serine 1464, serine 1466, serine 1469, and serine 1471 each carry the phosphoserine modification. Glycyl lysine isopeptide (Lys-Gly) (interchain with G-Cter in SUMO2) cross-links involve residues lysine 1479 and lysine 1487. The span at 1486-1497 (SKGENQDFRVDL) shows a compositional bias: basic and acidic residues. Phosphoserine is present on serine 1520.

This sequence belongs to the type II topoisomerase family. In terms of assembly, homodimer. Interacts with COPS5. Interacts with RECQL5; this stimulates DNA decatenation. Interacts with SETMAR; stimulates the topoisomerase activity. Interacts with DHX9; this interaction occurs in a E2 enzyme UBE2I- and RNA-dependent manner, negatively regulates DHX9-mediated double-stranded DNA and RNA duplex helicase activity and stimulates TOP2A-mediated supercoiled DNA relaxation activity. Interacts with HNRNPU (via C-terminus); this interaction protects the topoisomerase TOP2A from degradation and positively regulates the relaxation of supercoiled DNA in a RNA-dependent manner. Interacts with MCM3AP. Interacts with ERCC6. Interacts with PLSCR1. Interacts with GCNA; this interaction allows the resolution of topoisomerase II (TOP2A) DNA-protein cross-links. Interacts with POL1RA/RPA1 (via dock II) and UBTF in the context of Pol I complex; may assist Pol I transcription initiation by releasing supercoils occurring during DNA unwinding. Interacts with TPRN; TPRN interacts with a number of DNA damage response proteins, is recruited to sites of DNA damage and may play a role in DNA damage repair. The cofactor is Mg(2+). Requires Mn(2+) as cofactor. Ca(2+) is required as a cofactor. Phosphorylation has no effect on catalytic activity. However, phosphorylation at Ser-1105 by CSNK1D/CK1 promotes DNA cleavable complex formation.

Its subcellular location is the cytoplasm. It is found in the nucleus. It localises to the nucleoplasm. The protein localises to the nucleolus. It carries out the reaction ATP-dependent breakage, passage and rejoining of double-stranded DNA.. Functionally, key decatenating enzyme that alters DNA topology by binding to two double-stranded DNA molecules, generating a double-stranded break in one of the strands, passing the intact strand through the broken strand, and religating the broken strand. May play a role in regulating the period length of BMAL1 transcriptional oscillation. The chain is DNA topoisomerase 2-alpha (TOP2A) from Cricetulus griseus (Chinese hamster).